The following is a 158-amino-acid chain: SsrA-binding protein (158 aa).

The protein belongs to the SmpB family.

The protein localises to the cytoplasm. Its function is as follows. Required for rescue of stalled ribosomes mediated by trans-translation. Binds to transfer-messenger RNA (tmRNA), required for stable association of tmRNA with ribosomes. tmRNA and SmpB together mimic tRNA shape, replacing the anticodon stem-loop with SmpB. tmRNA is encoded by the ssrA gene; the 2 termini fold to resemble tRNA(Ala) and it encodes a 'tag peptide', a short internal open reading frame. During trans-translation Ala-aminoacylated tmRNA acts like a tRNA, entering the A-site of stalled ribosomes, displacing the stalled mRNA. The ribosome then switches to translate the ORF on the tmRNA; the nascent peptide is terminated with the 'tag peptide' encoded by the tmRNA and targeted for degradation. The ribosome is freed to recommence translation, which seems to be the essential function of trans-translation. The chain is SsrA-binding protein from Bifidobacterium longum (strain DJO10A).